A 162-amino-acid polypeptide reads, in one-letter code: MTDQPNNDAVANEENGPQFSLQRIYVRDLSFEAPKSPAIFRQEWTPTVSLDLNTRQKQLEGDFYEVVLTLSVTVNNGDEVAFIVEVQQAGIFLIKGLDDGAMSHTLGAFCPNILFPYAREAIDNLVVRGSFPALMLAPVNFDALYAQELQRMQEAGETPTVQ.

This sequence belongs to the SecB family. As to quaternary structure, homotetramer, a dimer of dimers. One homotetramer interacts with 1 SecA dimer.

It localises to the cytoplasm. Its function is as follows. One of the proteins required for the normal export of preproteins out of the cell cytoplasm. It is a molecular chaperone that binds to a subset of precursor proteins, maintaining them in a translocation-competent state. It also specifically binds to its receptor SecA. The protein is Protein-export protein SecB of Pseudomonas syringae pv. syringae (strain B728a).